Here is a 93-residue protein sequence, read N- to C-terminus: UPF0223 protein gbs1030 (93 aa).

It belongs to the UPF0223 family.

The protein is UPF0223 protein gbs1030 of Streptococcus agalactiae serotype III (strain NEM316).